A 287-amino-acid chain; its full sequence is Hydroxyethylthiazole kinase (287 aa).

Met50 provides a ligand contact to substrate. The ATP site is built by Arg126 and Ser185. Gly212 is a binding site for substrate.

The protein belongs to the Thz kinase family. Mg(2+) serves as cofactor.

The enzyme catalyses 5-(2-hydroxyethyl)-4-methylthiazole + ATP = 4-methyl-5-(2-phosphooxyethyl)-thiazole + ADP + H(+). It functions in the pathway cofactor biosynthesis; thiamine diphosphate biosynthesis; 4-methyl-5-(2-phosphoethyl)-thiazole from 5-(2-hydroxyethyl)-4-methylthiazole: step 1/1. Catalyzes the phosphorylation of the hydroxyl group of 4-methyl-5-beta-hydroxyethylthiazole (THZ). The chain is Hydroxyethylthiazole kinase from Methanobrevibacter smithii (strain ATCC 35061 / DSM 861 / OCM 144 / PS).